A 417-amino-acid chain; its full sequence is Gamma-glutamyl phosphate reductase (417 aa).

It belongs to the gamma-glutamyl phosphate reductase family.

Its subcellular location is the cytoplasm. It catalyses the reaction L-glutamate 5-semialdehyde + phosphate + NADP(+) = L-glutamyl 5-phosphate + NADPH + H(+). It participates in amino-acid biosynthesis; L-proline biosynthesis; L-glutamate 5-semialdehyde from L-glutamate: step 2/2. Catalyzes the NADPH-dependent reduction of L-glutamate 5-phosphate into L-glutamate 5-semialdehyde and phosphate. The product spontaneously undergoes cyclization to form 1-pyrroline-5-carboxylate. This is Gamma-glutamyl phosphate reductase from Haemophilus influenzae (strain PittGG).